Consider the following 72-residue polypeptide: Conorfamide-Tx2 (72 aa).

The signal sequence occupies residues 1–19 (MSGRGFLLLALLLLVTVEA). The propeptide occupies 20–25 (TRVEKK). The tract at residues 32 to 39 (AWSGPRNR) is positively charged region crucial for activity against MRGPRX1 receptors. Ile43 bears the Isoleucine amide mark. Positions 44–72 (GRRDMQSPLLSERLRFRALGFRQPSSQKQ) are excised as a propeptide.

This sequence belongs to the FARP (FMRFamide related peptide) family. Expressed by the venom duct.

Its subcellular location is the secreted. Its function is as follows. This peptide activates human sensory neuron-specific G-protein coupled receptors MRGPRX1, but not mouse receptors (EC(50)=0.54 uM). Compared with the agonist chloroquine (anti-malaria drug), it is 600-fold more potent. In vivo, induces itch sensation, since intradermal cheek injection into humanized transgenic mouse (mouse MRGPRX1 replaced by human MRGPRX1) induces scratching. In vivo, treatment of zebrafish larvae with high doses (10 uM) induces hypoactivity at the beginning of the experiment during the dark phase and hyperactivity in the strobe phase after one hour, even after the removal of the toxin from the solution. This Conus textile (Cloth-of-gold cone) protein is Conorfamide-Tx2.